We begin with the raw amino-acid sequence, 59 residues long: Large ribosomal subunit protein bL32C (59 aa).

Belongs to the bacterial ribosomal protein bL32 family.

The chain is Large ribosomal subunit protein bL32C (rpmF3) from Enterococcus faecalis (strain ATCC 700802 / V583).